We begin with the raw amino-acid sequence, 228 residues long: Superoxide dismutase [Mn], mitochondrial (228 aa).

A mitochondrion-targeting transit peptide spans 1–24; that stretch reads MALRTLVSRRTLATGLGFRQQLRG. Mn(2+) contacts are provided by histidine 52, histidine 100, aspartate 189, and histidine 193.

Belongs to the iron/manganese superoxide dismutase family. In terms of assembly, homotetramer. The cofactor is Mn(2+).

The protein resides in the mitochondrion matrix. It carries out the reaction 2 superoxide + 2 H(+) = H2O2 + O2. Its function is as follows. Destroys superoxide anion radicals which are normally produced within the cells and which are toxic to biological systems. In Nicotiana plumbaginifolia (Leadwort-leaved tobacco), this protein is Superoxide dismutase [Mn], mitochondrial (SODA).